The sequence spans 1787 residues: MASRRMSMYSVTSEGMGGPRGAGQQSTSVSTTTLLNAIHNIYLASQPYRLDAGTSLVVNTWLTATQAGPDGEVGGTVDPALAARAWEHARRRAEDGCIILGSLHQSTPSVMKPFLRSFPVSLPSSVFKALEALDPFIHCVAPFNPSAPRHAALGVTLTMNLAGNVTAASIALSQAGIDTAAGLLSIPAEAGYRAFDVFYHLLSSASTPAEREFLGLKSASSYALLARSGTYDPPSYLPTADDGASADDLRAALKEIGIKGSSHRDFISTLAALLKLGDTLDYTVDEEVLEEVCEDVGGLLGVDPEVLAKQCTTEDRQTLVGGLYEALVDWVISKANQAIQAQLARIRDGDESSDGGRGARTPNSAEDNGDTVCLTILEVPDLALAKALAMRGIFDDSQGINSEMKQDGVEVASAGQSVLRETQNAVVEAGPLLGDMSGPKGRDRQHHLEKREEVLEKVGIVADDDCFFKKLLFPVSGQGIQLGQAGRLDIQGVLGSSRAWYHLSIHPTDDSPASLAALPSINSAWSAGTVSRQLRAWRLPEWANRRNKNLDFTADFDVEEFVQRYSILGCREGRDGIETWILERGWSNGEVVVGHERVWMRESAWWEAENMLDMKPMGDMPMGASNLMAPPGVMAMDTGYSHNGSGYFPPINDAASNGSRDQLLHQRNQSQATLAMGMGHSPGVAPSVAPSGLRNVSKGDYGLGGKGDNHRDEILFNNEGEFVGALDPELANNKKIEEQQTSKSRRMWVALVWAITFWIPSPLLRYVGRMKRPDVRMAWREKFVLCFIIFLLNAAIVFWIIFLGRLLCPNFDKVWTRDEVKQHQGDTDFWVSNRGKVYDISKFWKIPHGDVGNEATQDLMQPFAGLSMDAYIPPPLFKACPGLGIGDRLALVPNATETENSAGMHISGPGQANPTSGLADANWYPDVFLPRMKEYYKGELVWDASKINSEGQNQDHKWVIYDNKVYDLRDYFSTLKTMNNLAQYKFLDDSLTQVVERNPGTDVTGTWNGLLSNAQRNNLTTYTTLRNNMNCMDNYFYVGTVDFRYTARCQTNNYFLLAFAIIMCAVILLKFVSALQFGSKRRPSPQDKFVICQVPAYTEGEDSLRKALDSLTALQYDNKRKLICVICDGVLTGEGNDRPTPKIVLDILGVDPKVDPPALPFKSVGASSEQLNYGKVYSGLYEFEGNVVPYVVVVKVGKESEQSKAKPGNRGKRDSQILLMSFLNRVHHRAPMNPLELEMFHQINNIIGVDPELYEYLLMIDADTCVREDALTRLVASCASDAKIAGICGETSLQNEERSWWTMIQVYEYFISHHLAKAFESLFGSVTCLPGCFTMYRLRTADKGKPLIISDNVIRDYSDCYVDTLHKKNLLSLGEDRYLTTLMTKHFPYMSFKFNPNAFCQTAAPEKWSVLLSQRRRWINSTIHNLVELMTLKEMCGFCCFSMRFVVFVDLFGTIILPATCVYLGYLIYTVASGTGPFPLITLIMLAAVYGLQALIFILKRQWQHIGWMIIYLLAFPIYSFILPIYSFWNQDNFSWGNTRIVVGESGKKTIVAVDDEGFDPRSIPLQRWDDYALANNLPGRRGGAGPTEKMDHVFADAYEMDDMRSVYSAARPGSVLTGMNRNTAYMSPNSPAPYQHMSRSPTAYAGPTPYSDNPAARQSMVSMSPYQDTNHGRMMSMSNLRNVANASPVPTRAGTAMGFAGGSRAPLGQSEAARQSTMSFDFQRNAAGPDDFQIVDAIRAVLMEVDLDTVTKKQVRALVEQRLQTELVGERRTFLDRQIDNELANM.

The tract at residues 1–26 (MASRRMSMYSVTSEGMGGPRGAGQQS) is disordered. Residue asparagine 164 is glycosylated (N-linked (GlcNAc...) asparagine). A disordered region spans residues 345 to 367 (RIRDGDESSDGGRGARTPNSAED). N-linked (GlcNAc...) asparagine glycans are attached at residues asparagine 643, asparagine 657, asparagine 668, and asparagine 695. Transmembrane regions (helical) follow at residues 747-767 (MWVALVWAITFWIPSPLLRYV) and 783-803 (FVLCFIIFLLNAAIVFWIIFL). 2 N-linked (GlcNAc...) asparagine glycosylation sites follow: asparagine 894 and asparagine 1018. A helical transmembrane segment spans residues 1055 to 1075 (FLLAFAIIMCAVILLKFVSAL). N-linked (GlcNAc...) asparagine glycosylation is present at asparagine 1420. Transmembrane regions (helical) follow at residues 1445 to 1465 (FVVFVDLFGTIILPATCVYLG), 1478 to 1498 (FPLITLIMLAAVYGLQALIFI), and 1506 to 1526 (IGWMIIYLLAFPIYSFILPIY). Asparagine 1533 is a glycosylation site (N-linked (GlcNAc...) asparagine). Residues 1628-1657 (SPNSPAPYQHMSRSPTAYAGPTPYSDNPAA) form a disordered region. In terms of domain architecture, DEK-C spans 1729–1785 (GPDDFQIVDAIRAVLMEVDLDTVTKKQVRALVEQRLQTELVGERRTFLDRQIDNELA).

This sequence belongs to the chitin synthase family. Class V subfamily.

It is found in the cell membrane. The catalysed reaction is [(1-&gt;4)-N-acetyl-beta-D-glucosaminyl](n) + UDP-N-acetyl-alpha-D-glucosamine = [(1-&gt;4)-N-acetyl-beta-D-glucosaminyl](n+1) + UDP + H(+). In terms of biological role, polymerizes chitin, a structural polymer of the cell wall and septum, by transferring the sugar moiety of UDP-GlcNAc to the non-reducing end of the growing chitin polymer. May play a minor overlapping role with CHS6 in growth and differentiation. This chain is Chitin synthase 5, found in Pyricularia oryzae (strain 70-15 / ATCC MYA-4617 / FGSC 8958) (Rice blast fungus).